We begin with the raw amino-acid sequence, 516 residues long: ADP-ribosylation factor GTPase-activating protein 3 (516 aa).

Residues L10–R126 enclose the Arf-GAP domain. The C4-type zinc-finger motif lies at C25 to C48. The segment at A170–G199 is disordered. A compositionally biased stretch (polar residues) spans S173–G194. At S231 the chain carries Phosphoserine. The stretch at N243–A264 forms a coiled coil. A phosphoserine mark is found at S270, S274, S331, and S370. The interval K392–T414 is disordered. Phosphoserine occurs at positions 428, 451, 453, 455, 457, and 458.

Its subcellular location is the cytoplasm. It localises to the golgi apparatus membrane. With respect to regulation, GAP activity stimulated by phosphatidylinositol 4,5-bisphosphate (PIP2). GTPase-activating protein (GAP) for ADP ribosylation factor 1 (ARF1). Hydrolysis of ARF1-bound GTP may lead to dissociation of coatomer from Golgi-derived membranes to allow fusion with target membranes. The protein is ADP-ribosylation factor GTPase-activating protein 3 of Macaca fascicularis (Crab-eating macaque).